The sequence spans 198 residues: Peptide deformylase (198 aa).

2 residues coordinate Fe cation: Cys123 and His170. Residue Glu171 is part of the active site. His174 lines the Fe cation pocket.

The protein belongs to the polypeptide deformylase family. It depends on Fe(2+) as a cofactor.

The enzyme catalyses N-terminal N-formyl-L-methionyl-[peptide] + H2O = N-terminal L-methionyl-[peptide] + formate. Removes the formyl group from the N-terminal Met of newly synthesized proteins. Requires at least a dipeptide for an efficient rate of reaction. N-terminal L-methionine is a prerequisite for activity but the enzyme has broad specificity at other positions. The chain is Peptide deformylase from Mycoplasmopsis pulmonis (strain UAB CTIP) (Mycoplasma pulmonis).